The sequence spans 168 residues: Transcription antitermination protein NusB (168 aa).

Belongs to the NusB family.

Functionally, involved in transcription antitermination. Required for transcription of ribosomal RNA (rRNA) genes. Binds specifically to the boxA antiterminator sequence of the ribosomal RNA (rrn) operons. This chain is Transcription antitermination protein NusB, found in Deinococcus deserti (strain DSM 17065 / CIP 109153 / LMG 22923 / VCD115).